Consider the following 124-residue polypeptide: Protein ApaG (124 aa).

Positions 1–124 (MSRYELTVQV…FALAMPRMLH (124 aa)) constitute an ApaG domain.

The polypeptide is Protein ApaG (Ralstonia nicotianae (strain ATCC BAA-1114 / GMI1000) (Ralstonia solanacearum)).